The sequence spans 69 residues: Large ribosomal subunit protein uL29 (69 aa).

This sequence belongs to the universal ribosomal protein uL29 family.

The protein is Large ribosomal subunit protein uL29 of Staphylococcus aureus (strain Mu3 / ATCC 700698).